Consider the following 654-residue polypeptide: Acetyl-coenzyme A synthetase (654 aa).

CoA is bound by residues 191-194 (RRGQ) and Thr315. Residues 391 to 393 (GEP), 415 to 420 (DTWWQT), Asp506, and Arg521 each bind ATP. CoA is bound at residue Ser529. Arg532 contacts ATP. Mg(2+)-binding residues include Val543, His545, and Val548. Lys615 bears the N6-acetyllysine mark.

The protein belongs to the ATP-dependent AMP-binding enzyme family. Mg(2+) is required as a cofactor. Acetylated. Deacetylation by the SIR2-homolog deacetylase activates the enzyme.

The enzyme catalyses acetate + ATP + CoA = acetyl-CoA + AMP + diphosphate. Functionally, catalyzes the conversion of acetate into acetyl-CoA (AcCoA), an essential intermediate at the junction of anabolic and catabolic pathways. AcsA undergoes a two-step reaction. In the first half reaction, AcsA combines acetate with ATP to form acetyl-adenylate (AcAMP) intermediate. In the second half reaction, it can then transfer the acetyl group from AcAMP to the sulfhydryl group of CoA, forming the product AcCoA. In Gemmatimonas aurantiaca (strain DSM 14586 / JCM 11422 / NBRC 100505 / T-27), this protein is Acetyl-coenzyme A synthetase.